The chain runs to 508 residues: Photosystem II CP47 reaction center protein (508 aa).

Helical transmembrane passes span 21–36 (SVHI…WAGS), 101–115 (IVFS…IWHW), 140–156 (GIHL…FGAF), 203–218 (IAAG…FHLS), 237–252 (VLSS…AFVV), and 457–472 (SFAL…HGSR).

This sequence belongs to the PsbB/PsbC family. PsbB subfamily. As to quaternary structure, PSII is composed of 1 copy each of membrane proteins PsbA, PsbB, PsbC, PsbD, PsbE, PsbF, PsbH, PsbI, PsbJ, PsbK, PsbL, PsbM, PsbT, PsbX, PsbY, PsbZ, Psb30/Ycf12, at least 3 peripheral proteins of the oxygen-evolving complex and a large number of cofactors. It forms dimeric complexes. The cofactor is Binds multiple chlorophylls. PSII binds additional chlorophylls, carotenoids and specific lipids..

The protein resides in the plastid. It is found in the chloroplast thylakoid membrane. Its function is as follows. One of the components of the core complex of photosystem II (PSII). It binds chlorophyll and helps catalyze the primary light-induced photochemical processes of PSII. PSII is a light-driven water:plastoquinone oxidoreductase, using light energy to abstract electrons from H(2)O, generating O(2) and a proton gradient subsequently used for ATP formation. In Helianthus annuus (Common sunflower), this protein is Photosystem II CP47 reaction center protein.